The following is a 629-amino-acid chain: MFYQDPFDVIIIGGGHAGTEAAMAAARMGQQTLLLTHNIDTLGQMSCNPTIGGIGKGHLVKEVDALGGLMAKAIDQAGIQFKILNASKGPAVRATRAQADRVLYRQAVRIALENQPNLMIFQQAVEDLIVENDRVVGAVTQMGLKFRAKAVVLTVGTFLDGKIHIGLDNYSGGRAGDPPSIPLSRRLRELPLRVSRLKTGTPPRIDARTIDFSVLAQQHGDNPMPVFSFMGNAFQHPQQVPCYITHTNEKTHDVIRNNLDRSPMYAGVIEGIGPRYCPSIEDKVMRFADRNQHQIFLEPEGLTSNEIYPNGISTSLPFDVQMQIVRSMQGMENAKIVRPGYAIEYDFFDPRDLKPTLESKFIHGLFFAGQINGTTGYEEAAAQGLLAGLNAARLSADKEGWAPARSQAYLGVLVDDLCTLGTKEPYRMFTSRAEYRLMLREDNADLRLTEMGRELGLVDDERWARFNEKLENIERERQRLKSTWVTPSAESADEVNAHLTTPLSREASGEDLLRRPEMTYAQLTSLAAFAPALEDEQAAEQVEIQVKYEGYIARQQDEIEKQLRNENTLLPATLDYRQVSGLSNEVIAKLNDHKPASIGQASRISGVTPAAISILLVWLKKQGMLRRSA.

FAD contacts are provided by residues 13–18, V125, and S180; that span reads GGGHAG. Residue 273 to 287 participates in NAD(+) binding; sequence GPRYCPSIEDKVMRF. An FAD-binding site is contributed by Q370.

Belongs to the MnmG family. As to quaternary structure, homodimer. Heterotetramer of two MnmE and two MnmG subunits. FAD is required as a cofactor.

Its subcellular location is the cytoplasm. In terms of biological role, NAD-binding protein involved in the addition of a carboxymethylaminomethyl (cmnm) group at the wobble position (U34) of certain tRNAs, forming tRNA-cmnm(5)s(2)U34. The protein is tRNA uridine 5-carboxymethylaminomethyl modification enzyme MnmG of Salmonella typhi.